The sequence spans 24 residues: Superoxide dismutase [Cu-Zn], chloroplastic (24 aa).

It belongs to the Cu-Zn superoxide dismutase family. Homodimer. Requires Cu cation as cofactor. Zn(2+) is required as a cofactor.

The protein resides in the plastid. It localises to the chloroplast. The enzyme catalyses 2 superoxide + 2 H(+) = H2O2 + O2. Its function is as follows. Destroys radicals which are normally produced within the cells and which are toxic to biological systems. This Picea abies (Norway spruce) protein is Superoxide dismutase [Cu-Zn], chloroplastic.